Reading from the N-terminus, the 352-residue chain is Ion-translocating oxidoreductase complex subunit D (352 aa).

A run of 5 helical transmembrane segments spans residues isoleucine 20–glycine 40, glycine 42–leucine 62, alanine 78–alanine 109, proline 123–leucine 143, and isoleucine 148–alanine 168. Threonine 187 is subject to FMN phosphoryl threonine. The next 5 membrane-spanning stretches (helical) occupy residues isoleucine 214 to leucine 234, tryptophan 242 to phenylalanine 262, leucine 267 to leucine 287, leucine 301 to proline 321, and aspartate 322 to threonine 342.

This sequence belongs to the NqrB/RnfD family. The complex is composed of six subunits: RsxA, RsxB, RsxC, RsxD, RsxE and RsxG. The cofactor is FMN.

Its subcellular location is the cell inner membrane. Functionally, part of a membrane-bound complex that couples electron transfer with translocation of ions across the membrane. Required to maintain the reduced state of SoxR. The polypeptide is Ion-translocating oxidoreductase complex subunit D (Escherichia coli O6:H1 (strain CFT073 / ATCC 700928 / UPEC)).